Consider the following 1024-residue polypeptide: RNA cytidine acetyltransferase (1024 aa).

Position 287-296 (287-296) interacts with ATP; it reads GRGKSAALGL. Lysine 426 carries the post-translational modification N6-acetyllysine. An ATP-binding site is contributed by arginine 470. The N-acetyltransferase domain maps to 558 to 753; the sequence is CLLPPVPPTQ…HSCIMLKTLA (196 aa). Residues 629-631 and 636-642 contribute to the acetyl-CoA site; these read IAV and QGMGYGS. The segment at 702-1024 is required for localization to the nucleolus and midbody; it reads PAERLDYLGV…RKDMKLKRKK (323 aa). Threonine 716 bears the Phosphothreonine mark. Residue arginine 725 coordinates acetyl-CoA. Phosphoserine is present on residues serine 934, serine 984, and serine 987. Residues 990–1024 form a disordered region; it reads SDKKRKLETKQEPKQSKKLKKRDNNRKDMKLKRKK. Residues 1005 to 1024 show a composition bias toward basic residues; the sequence is SKKLKKRDNNRKDMKLKRKK.

Belongs to the RNA cytidine acetyltransferase family. NAT10 subfamily. Part of the small subunit (SSU) processome, composed of more than 70 proteins and the RNA chaperone small nucleolar RNA (snoRNA) U3. Interacts with THUMPD1. Interacts with SUN1 (via N-terminus). Interacts with TERT.

The protein resides in the nucleus. The protein localises to the nucleolus. It catalyses the reaction a cytidine in 18S rRNA + acetyl-CoA + ATP + H2O = an N(4)-acetylcytidine in 18S rRNA + ADP + phosphate + CoA + H(+). The enzyme catalyses a cytidine in tRNA + acetyl-CoA + ATP + H2O = an N(4)-acetylcytidine in tRNA + ADP + phosphate + CoA + H(+). The catalysed reaction is a cytidine in mRNA + acetyl-CoA + ATP + H2O = an N(4)-acetylcytidine in mRNA + ADP + phosphate + CoA + H(+). RNA cytidine acetyltransferase that catalyzes the formation of N(4)-acetylcytidine (ac4C) modification on mRNAs, 18S rRNA and tRNAs. Catalyzes ac4C modification of a broad range of mRNAs, enhancing mRNA stability and translation. mRNA ac4C modification is frequently present within wobble cytidine sites and promotes translation efficiency. Mediates the formation of ac4C at position 1842 in 18S rRNA. May also catalyze the formation of ac4C at position 1337 in 18S rRNA. Required for early nucleolar cleavages of precursor rRNA at sites A0, A1 and A2 during 18S rRNA synthesis. Catalyzes the formation of ac4C in serine and leucine tRNAs. Requires the tRNA-binding adapter protein THUMPD1 for full tRNA acetyltransferase activity but not for 18S rRNA acetylation. In addition to RNA acetyltransferase activity, also able to acetylate lysine residues of proteins, such as histones, microtubules, p53/TP53 and MDM2, in vitro. The relevance of the protein lysine acetyltransferase activity is however unsure in vivo. Activates telomerase activity by stimulating the transcription of TERT, and may also regulate telomerase function by affecting the balance of telomerase subunit assembly, disassembly, and localization. Involved in the regulation of centrosome duplication by acetylating CENATAC during mitosis, promoting SASS6 proteasome degradation. Part of the small subunit (SSU) processome, first precursor of the small eukaryotic ribosomal subunit. During the assembly of the SSU processome in the nucleolus, many ribosome biogenesis factors, an RNA chaperone and ribosomal proteins associate with the nascent pre-rRNA and work in concert to generate RNA folding, modifications, rearrangements and cleavage as well as targeted degradation of pre-ribosomal RNA by the RNA exosome. The polypeptide is RNA cytidine acetyltransferase (Mus musculus (Mouse)).